The following is a 118-amino-acid chain: MSRNTRINALLLLAVAALAVLPLVLGLGDHKEEPFAGADAEAETAITEIEPDYEPWFSPLHEPPSGEVESALFALQAALGAGVLAYYFGLRRGRRQGEERASAASGAAAAPGDAPEGD.

Helical transmembrane passes span 7–27 (INAL…VLGL) and 70–90 (SALF…YFGL). The disordered stretch occupies residues 99-118 (ERASAASGAAAAPGDAPEGD). The span at 102 to 118 (SAASGAAAAPGDAPEGD) shows a compositional bias: low complexity.

It belongs to the CbiN family. In terms of assembly, forms an energy-coupling factor (ECF) transporter complex composed of an ATP-binding protein (A component, CbiO), a transmembrane protein (T component, CbiQ) and 2 possible substrate-capture proteins (S components, CbiM and CbiN) of unknown stoichimetry.

The protein localises to the cell membrane. The protein operates within cofactor biosynthesis; adenosylcobalamin biosynthesis. Functionally, part of the energy-coupling factor (ECF) transporter complex CbiMNOQ involved in cobalt import. The chain is Cobalt transport protein CbiN from Streptomyces coelicolor (strain ATCC BAA-471 / A3(2) / M145).